We begin with the raw amino-acid sequence, 725 residues long: Phosphoribosylformylglycinamidine synthase subunit PurL (725 aa).

His-42 is a catalytic residue. Residues Tyr-45 and Lys-84 each coordinate ATP. Residue Glu-86 coordinates Mg(2+). Residues 87-90 (SHNH) and Arg-109 each bind substrate. His-88 acts as the Proton acceptor in catalysis. Residue Asp-110 coordinates Mg(2+). Gln-237 serves as a coordination point for substrate. Position 265 (Asp-265) interacts with Mg(2+). 309 to 311 (ESQ) contributes to the substrate binding site. ATP-binding residues include Asp-491 and Gly-528. Asn-529 is a Mg(2+) binding site. Substrate is bound at residue Ser-531.

This sequence belongs to the FGAMS family. Monomer. Part of the FGAM synthase complex composed of 1 PurL, 1 PurQ and 2 PurS subunits.

It is found in the cytoplasm. It carries out the reaction N(2)-formyl-N(1)-(5-phospho-beta-D-ribosyl)glycinamide + L-glutamine + ATP + H2O = 2-formamido-N(1)-(5-O-phospho-beta-D-ribosyl)acetamidine + L-glutamate + ADP + phosphate + H(+). It functions in the pathway purine metabolism; IMP biosynthesis via de novo pathway; 5-amino-1-(5-phospho-D-ribosyl)imidazole from N(2)-formyl-N(1)-(5-phospho-D-ribosyl)glycinamide: step 1/2. Its function is as follows. Part of the phosphoribosylformylglycinamidine synthase complex involved in the purines biosynthetic pathway. Catalyzes the ATP-dependent conversion of formylglycinamide ribonucleotide (FGAR) and glutamine to yield formylglycinamidine ribonucleotide (FGAM) and glutamate. The FGAM synthase complex is composed of three subunits. PurQ produces an ammonia molecule by converting glutamine to glutamate. PurL transfers the ammonia molecule to FGAR to form FGAM in an ATP-dependent manner. PurS interacts with PurQ and PurL and is thought to assist in the transfer of the ammonia molecule from PurQ to PurL. The protein is Phosphoribosylformylglycinamidine synthase subunit PurL of Campylobacter lari (strain RM2100 / D67 / ATCC BAA-1060).